Here is a 526-residue protein sequence, read N- to C-terminus: GMP synthase [glutamine-hydrolyzing] (526 aa).

The Glutamine amidotransferase type-1 domain occupies 9–208 (RILILDFGSQ…VMDICGCETL (200 aa)). The active-site Nucleophile is the Cys86. Residues His182 and Glu184 contribute to the active site. The GMPS ATP-PPase domain maps to 209–401 (WTSSSIIEDA…LGLPYEMLYR (193 aa)). Residue 236-242 (SGGVDSS) participates in ATP binding.

In terms of assembly, homodimer.

It catalyses the reaction XMP + L-glutamine + ATP + H2O = GMP + L-glutamate + AMP + diphosphate + 2 H(+). Its pathway is purine metabolism; GMP biosynthesis; GMP from XMP (L-Gln route): step 1/1. Its function is as follows. Catalyzes the synthesis of GMP from XMP. This Psychromonas ingrahamii (strain DSM 17664 / CCUG 51855 / 37) protein is GMP synthase [glutamine-hydrolyzing].